The primary structure comprises 843 residues: INO80 complex subunit D-B (843 aa).

Over residues T159–H175 the composition is skewed to basic and acidic residues. Disordered stretches follow at residues T159–R216, F221–N240, Y503–G550, S695–D726, and L791–P843. 3 stretches are compositionally biased toward polar residues: residues L176 to H187, R197 to R216, and F221 to H231. The span at Y503–Q540 shows a compositional bias: basic residues. Positions P705–P717 are enriched in pro residues. Residues Q796 to T821 are compositionally biased toward low complexity.

This sequence belongs to the INO80D family. Component of the chromatin-remodeling INO80 complex.

It localises to the nucleus. Putative regulatory component of the chromatin remodeling INO80 complex which is involved in transcriptional regulation, DNA replication and probably DNA repair. This is INO80 complex subunit D-B (ino80db) from Danio rerio (Zebrafish).